The primary structure comprises 123 residues: Protein Wnt-7b (123 aa).

Residue Ser-1 is the site of O-palmitoleoyl serine; by PORCN attachment. The disordered linker stretch occupies residues 33 to 61 (VEAVRATRLRQPTFLKIKKPRTYRKPMVT). Residues Cys-89 and Cys-104 are joined by a disulfide bond. Asn-90 is a glycosylation site (N-linked (GlcNAc...) asparagine).

Belongs to the Wnt family. Palmitoleoylation is required for efficient binding to frizzled receptors. Depalmitoleoylation leads to Wnt signaling pathway inhibition.

Its subcellular location is the secreted. It is found in the extracellular space. The protein resides in the extracellular matrix. Functionally, ligand for members of the frizzled family of seven transmembrane receptors that functions in the canonical Wnt/beta-catenin signaling pathway. Required for normal fusion of the chorion and the allantois during placenta development. Required for central nervous system (CNS) angiogenesis and blood-brain barrier regulation. In Alopias vulpinus (Common thresher shark), this protein is Protein Wnt-7b (WNT-7B).